The chain runs to 757 residues: Relaxin receptor 1 (757 aa).

Residues 1-408 (MTSGSVFFYI…LENLLASIIQ (408 aa)) are Extracellular-facing. One can recognise an LDL-receptor class A domain in the interval 26-63 (KCSLGYFPCGNITKCLPQLLHCNGVDDCGNQADEDNCG). Cystine bridges form between C27–C40, C34–C53, and C47–C62. N36 carries N-linked (GlcNAc...) asparagine glycosylation. Positions 45, 48, 50, 52, 58, and 59 each coordinate Ca(2+). One can recognise an LRRNT domain in the interval 91-127 (ETPECLVGSVPVQCLCRGLELDCDETNLRAVPSVSSN). N127 carries N-linked (GlcNAc...) asparagine glycosylation. LRR repeat units lie at residues 151-172 (DLQK…AFRG), 175-196 (SLTK…VFED), 199-220 (RLEW…TFYG), 223-244 (SLIL…PLCQ), 248-269 (RLHW…TLIS), 272-293 (NLTV…TFAP), 296-317 (KLDE…IFKD), 320-341 (ELSQ…QFDY), and 344-365 (KLKS…MFRP). N-linked (GlcNAc...) asparagine glycans are attached at residues N264 and N272. N-linked (GlcNAc...) asparagine glycosylation occurs at N325. Residue N368 is glycosylated (N-linked (GlcNAc...) asparagine). A helical membrane pass occupies residues 409-429 (RVFVWVVSAVTCFGNVFVICM). At 430–443 (RPYIRSENKLYAMS) the chain is on the cytoplasmic side. A helical transmembrane segment spans residues 444–464 (IISLCCADCLMGIYLFVIGGF). The Extracellular portion of the chain corresponds to 465 to 486 (DLKFRGEYNKHAQLWMESTHCQ). A disulfide bridge links C485 with C563. A helical membrane pass occupies residues 487–507 (LVGSLAILSTEVSVLLLTFLT). At 508–527 (LEKYICIVYPFRCVRPGKCR) the chain is on the cytoplasmic side. Residues 528–548 (TITVLILIWITGFIVAFIPLS) form a helical membrane-spanning segment. Topologically, residues 549-577 (NKEFFKNYYGTNGVCFPLHSEDTESIGAQ) are extracellular. Residues 578–598 (VYSVAIFLGINLAAFIIIVFS) form a helical membrane-spanning segment. Residues 599-629 (YGSMFYSVHQSAITATEIRNQVKKEMILAKR) lie on the Cytoplasmic side of the membrane. A helical membrane pass occupies residues 630-650 (FFFIVFTDALCWIPIFVVKFL). The Extracellular segment spans residues 651–660 (SLLQVEIPGT). A helical membrane pass occupies residues 661-681 (ITSWVVIFILPINSALNPILY). Residues 682-757 (TLTTRPFKEM…SQSTRLNSYS (76 aa)) are Cytoplasmic-facing.

The protein belongs to the G-protein coupled receptor 1 family. In terms of assembly, interacts with C1QTNF8.

It localises to the cell membrane. Its function is as follows. Receptor for relaxins. The activity of this receptor is mediated by G proteins leading to stimulation of adenylate cyclase and an increase of cAMP. Binding of the ligand may also activate a tyrosine kinase pathway that inhibits the activity of a phosphodiesterase that degrades cAMP. This is Relaxin receptor 1 (RXFP1) from Pongo abelii (Sumatran orangutan).